Consider the following 396-residue polypeptide: CCA-adding enzyme (396 aa).

Residues Gly32 and Arg35 each contribute to the ATP site. Residues Gly32 and Arg35 each contribute to the CTP site. The Mg(2+) site is built by Asp45 and Asp47. ATP is bound by residues Arg116, Asp159, Arg162, Arg165, and Arg168. Residues Arg116, Asp159, Arg162, Arg165, and Arg168 each coordinate CTP.

Belongs to the tRNA nucleotidyltransferase/poly(A) polymerase family. Bacterial CCA-adding enzyme type 3 subfamily. In terms of assembly, homodimer. It depends on Mg(2+) as a cofactor.

It catalyses the reaction a tRNA precursor + 2 CTP + ATP = a tRNA with a 3' CCA end + 3 diphosphate. The catalysed reaction is a tRNA with a 3' CCA end + 2 CTP + ATP = a tRNA with a 3' CCACCA end + 3 diphosphate. Its function is as follows. Catalyzes the addition and repair of the essential 3'-terminal CCA sequence in tRNAs without using a nucleic acid template. Adds these three nucleotides in the order of C, C, and A to the tRNA nucleotide-73, using CTP and ATP as substrates and producing inorganic pyrophosphate. tRNA 3'-terminal CCA addition is required both for tRNA processing and repair. Also involved in tRNA surveillance by mediating tandem CCA addition to generate a CCACCA at the 3' terminus of unstable tRNAs. While stable tRNAs receive only 3'-terminal CCA, unstable tRNAs are marked with CCACCA and rapidly degraded. The chain is CCA-adding enzyme from Lactobacillus delbrueckii subsp. bulgaricus (strain ATCC BAA-365 / Lb-18).